Consider the following 339-residue polypeptide: Glycerol-3-phosphate dehydrogenase [NAD(P)+] (339 aa).

3 residues coordinate NADPH: Ser11, Trp12, and Lys109. Residues Lys109, Gly140, and Ser142 each contribute to the sn-glycerol 3-phosphate site. Ala144 serves as a coordination point for NADPH. Sn-glycerol 3-phosphate is bound by residues Lys195, Asp249, Ser259, Arg260, and Asn261. Lys195 serves as the catalytic Proton acceptor. Arg260 is a binding site for NADPH. NADPH-binding residues include Val284 and Glu286.

It belongs to the NAD-dependent glycerol-3-phosphate dehydrogenase family.

The protein resides in the cytoplasm. The catalysed reaction is sn-glycerol 3-phosphate + NAD(+) = dihydroxyacetone phosphate + NADH + H(+). It carries out the reaction sn-glycerol 3-phosphate + NADP(+) = dihydroxyacetone phosphate + NADPH + H(+). Its pathway is membrane lipid metabolism; glycerophospholipid metabolism. Its function is as follows. Catalyzes the reduction of the glycolytic intermediate dihydroxyacetone phosphate (DHAP) to sn-glycerol 3-phosphate (G3P), the key precursor for phospholipid synthesis. The polypeptide is Glycerol-3-phosphate dehydrogenase [NAD(P)+] (Lactobacillus helveticus (strain DPC 4571)).